The following is a 623-amino-acid chain: Pyranose 2-oxidase (623 aa).

The signal sequence occupies residues 1–27; sequence MSTSSSDPFFNFTKSSFRSAAAQKASA. Residues 28 to 38 constitute a propeptide that is removed on maturation; sequence TSLPPLPGPDK. At histidine 167 the chain carries Tele-8alpha-FAD histidine. Residues glutamine 448 and histidine 450 each coordinate substrate. Histidine 548 serves as the catalytic Proton acceptor. Residue asparagine 593 is part of the active site.

Belongs to the GMC oxidoreductase family. Homotetramer. FAD is required as a cofactor. Post-translationally, not glycosylated.

Its subcellular location is the periplasm. It catalyses the reaction D-glucose + O2 = 2-dehydro-D-glucose + H2O2. Its function is as follows. Catalyzes the oxidation of various aldopyranoses and disaccharides on carbon-2 to the corresponding 2-keto sugars concomitant with the reduction of O(2) to H(2)O(2). Plays an important role in lignin degradation of wood rot fungi by supplying the essential cosubstrate H(2)O(2) for the ligninolytic peroxidases, lignin peroxidase and manganese-dependent peroxidase. The preferred substrate is D-glucose which is converted to 2-dehydro-D-glucose. Also acts on D-xylose, together with D-glucose the major sugars derived from wood, on L-sorbose, D-galactose and 1,5-anhydroglucitol, a diagnostic marker of diabetes mellitus. The chain is Pyranose 2-oxidase (P2OX) from Trametes versicolor (White-rot fungus).